The following is a 491-amino-acid chain: Probable cysteine proteinase 024R (491 aa).

Catalysis depends on residues Cys132, His325, and Asn355. The helical transmembrane segment at 467-487 threads the bilayer; that stretch reads ALDLALLVLPALLIVIVVLIG.

It belongs to the peptidase C1 family.

It localises to the membrane. Probable cysteine protease. In Invertebrate iridescent virus 3 (IIV-3), this protein is Probable cysteine proteinase 024R.